Here is a 185-residue protein sequence, read N- to C-terminus: Ribosome-recycling factor (185 aa).

The protein belongs to the RRF family.

The protein localises to the cytoplasm. Functionally, responsible for the release of ribosomes from messenger RNA at the termination of protein biosynthesis. May increase the efficiency of translation by recycling ribosomes from one round of translation to another. This chain is Ribosome-recycling factor, found in Vibrio cholerae serotype O1 (strain ATCC 39541 / Classical Ogawa 395 / O395).